A 339-amino-acid chain; its full sequence is Holliday junction branch migration complex subunit RuvB (339 aa).

The segment at 1 to 187 is large ATPase domain (RuvB-L); it reads MQGFEDENRI…FGVICKLDYY (187 aa). ATP contacts are provided by residues Leu26, Arg27, Gly68, Lys71, Thr72, Thr73, 134–136, Arg177, Tyr187, and Arg224; that span reads EDF. Thr72 is a binding site for Mg(2+). The tract at residues 188 to 258 is small ATPAse domain (RuvB-S); that stretch reads TVDELSKIVL…VAKDALELLG (71 aa). The interval 261 to 339 is head domain (RuvB-H); the sequence is SLGLDFVDEK…HLKIPYPNEK (79 aa). 3 residues coordinate DNA: Arg297, Arg316, and Arg321.

This sequence belongs to the RuvB family. In terms of assembly, homohexamer. Forms an RuvA(8)-RuvB(12)-Holliday junction (HJ) complex. HJ DNA is sandwiched between 2 RuvA tetramers; dsDNA enters through RuvA and exits via RuvB. An RuvB hexamer assembles on each DNA strand where it exits the tetramer. Each RuvB hexamer is contacted by two RuvA subunits (via domain III) on 2 adjacent RuvB subunits; this complex drives branch migration. In the full resolvosome a probable DNA-RuvA(4)-RuvB(12)-RuvC(2) complex forms which resolves the HJ.

It localises to the cytoplasm. The catalysed reaction is ATP + H2O = ADP + phosphate + H(+). Functionally, the RuvA-RuvB-RuvC complex processes Holliday junction (HJ) DNA during genetic recombination and DNA repair, while the RuvA-RuvB complex plays an important role in the rescue of blocked DNA replication forks via replication fork reversal (RFR). RuvA specifically binds to HJ cruciform DNA, conferring on it an open structure. The RuvB hexamer acts as an ATP-dependent pump, pulling dsDNA into and through the RuvAB complex. RuvB forms 2 homohexamers on either side of HJ DNA bound by 1 or 2 RuvA tetramers; 4 subunits per hexamer contact DNA at a time. Coordinated motions by a converter formed by DNA-disengaged RuvB subunits stimulates ATP hydrolysis and nucleotide exchange. Immobilization of the converter enables RuvB to convert the ATP-contained energy into a lever motion, pulling 2 nucleotides of DNA out of the RuvA tetramer per ATP hydrolyzed, thus driving DNA branch migration. The RuvB motors rotate together with the DNA substrate, which together with the progressing nucleotide cycle form the mechanistic basis for DNA recombination by continuous HJ branch migration. Branch migration allows RuvC to scan DNA until it finds its consensus sequence, where it cleaves and resolves cruciform DNA. This chain is Holliday junction branch migration complex subunit RuvB, found in Clostridioides difficile (strain 630) (Peptoclostridium difficile).